The following is a 370-amino-acid chain: Biotin synthase (370 aa).

The Radical SAM core domain maps to 79–314; sequence CCGNVVDLCS…KQIIRYAGGR (236 aa). [4Fe-4S] cluster is bound by residues Cys-97, Cys-101, and Cys-104. [2Fe-2S] cluster contacts are provided by Cys-142, Cys-179, Cys-239, and Arg-309.

This sequence belongs to the radical SAM superfamily. Biotin synthase family. In terms of assembly, homodimer. [4Fe-4S] cluster serves as cofactor. It depends on [2Fe-2S] cluster as a cofactor.

The catalysed reaction is (4R,5S)-dethiobiotin + (sulfur carrier)-SH + 2 reduced [2Fe-2S]-[ferredoxin] + 2 S-adenosyl-L-methionine = (sulfur carrier)-H + biotin + 2 5'-deoxyadenosine + 2 L-methionine + 2 oxidized [2Fe-2S]-[ferredoxin]. It functions in the pathway cofactor biosynthesis; biotin biosynthesis; biotin from 7,8-diaminononanoate: step 2/2. Catalyzes the conversion of dethiobiotin (DTB) to biotin by the insertion of a sulfur atom into dethiobiotin via a radical-based mechanism. This Trichodesmium erythraeum (strain IMS101) protein is Biotin synthase.